The following is a 144-amino-acid chain: Alpha-crystallin (144 aa).

The sHSP domain maps to 33–143 (PTFDTRLMRL…TEKHIQIRST (111 aa)).

The protein belongs to the small heat shock protein (HSP20) family.

It is found in the secreted. It localises to the cell wall. The protein resides in the cytoplasm. Acts as a chaperone. The protein is Alpha-crystallin (hspX) of Mycobacterium bovis (strain ATCC BAA-935 / AF2122/97).